The following is a 132-amino-acid chain: Nucleoid-associated protein EspR (132 aa).

The segment at residues 38–50 is a DNA-binding region (H-T-H motif); that stretch reads ITMSAPYLSQLRS.

In terms of assembly, homodimer. Binds DNA as a dimer of dimers.

It is found in the cytoplasm. It localises to the nucleoid. Functionally, virulence regulator that has both architectural and regulatory roles. Impacts cell wall functions and pathogenesis through regulation of multiple genes. The polypeptide is Nucleoid-associated protein EspR (Mycobacterium tuberculosis (strain CDC 1551 / Oshkosh)).